A 98-amino-acid chain; its full sequence is Dehydrogenase acuH (98 aa).

Its pathway is secondary metabolite biosynthesis. Its function is as follows. Dehydrogenase; part of the gene cluster that mediates the biosynthesis of aculins. The pathway begins with the synthesis of 6-methylsalicylic acid by the polyketide synthase (PKS) acuA via condensation of acetate and malonate units. The 6-methylsalicylic acid decarboxylase acuB then catalyzes the decarboxylation of 6-methylsalicylic acid to yield m-cresol (also known as 3-methylphenol). These first reactions occur in the cytosol. The intermediate m-cresol is then transported into the endoplasmic reticulum where the cytochrome P450 monooxygenase acuC converts it to m-hydroxybenzyl alcohol, which is further converted to gentisyl alcohol by the cytochrome P450 monooxygenase acuD. Gentisyl alcohol is further oxidized by the oxidoreductase acuE that probably catalyzes hydroxylation of the aromatic ring. The aromatic system might then be opened by oxidation through a Baeyer-Villiger type of oxidation, which could be catalyzed by acuF, with the carboxylic acid at C-1 subsequently reduced to an aldehyde by acuG. Subsequently, a hemiacetal is formed, before the dehydrogenase acuH would reduce the double bond between C-4 and C-6. Finally, keto-enol tautomerism results in formation of aculinic acid, which exists as two diastereomers (both R/S configurations at C-1) by non-enzymatic hemiacetal formation. The carboxypeptidase acuI could be involved in the linking of aculinic acid to an aculene A moiety produced by the aculene biosynthesis cluster and which leads to the production of aculin A. AcuI may also be involved in the attachment of proline to aculinic acid to form epi-aculins A and B. This chain is Dehydrogenase acuH, found in Aspergillus aculeatus (strain ATCC 16872 / CBS 172.66 / WB 5094).